The sequence spans 307 residues: Metapyrocatechase (307 aa).

VOC domains lie at 7 to 122 and 150 to 269; these read RPGH…LYAD and RFDH…VFCG. Fe cation is bound by residues His153, His214, and Glu265.

The protein belongs to the extradiol ring-cleavage dioxygenase family. As to quaternary structure, homotetramer. It depends on Fe(2+) as a cofactor.

The catalysed reaction is catechol + O2 = (2Z,4E)-2-hydroxy-6-oxohexa-2,4-dienoate + H(+). It participates in aromatic compound metabolism; benzoate degradation via hydroxylation. This is Metapyrocatechase (dmpB) from Pseudomonas sp. (strain CF600).